The following is a 241-amino-acid chain: Triosephosphate isomerase (241 aa).

A substrate-binding site is contributed by 9–11 (NWK). Catalysis depends on histidine 96, which acts as the Electrophile. Glutamate 165 (proton acceptor) is an active-site residue. Residues glycine 171, serine 204, and 225 to 226 (GG) each bind substrate.

This sequence belongs to the triosephosphate isomerase family. Homodimer.

The protein resides in the cytoplasm. It carries out the reaction D-glyceraldehyde 3-phosphate = dihydroxyacetone phosphate. It functions in the pathway carbohydrate biosynthesis; gluconeogenesis. The protein operates within carbohydrate degradation; glycolysis; D-glyceraldehyde 3-phosphate from glycerone phosphate: step 1/1. Involved in the gluconeogenesis. Catalyzes stereospecifically the conversion of dihydroxyacetone phosphate (DHAP) to D-glyceraldehyde-3-phosphate (G3P). This Nostoc sp. (strain PCC 7120 / SAG 25.82 / UTEX 2576) protein is Triosephosphate isomerase.